A 352-amino-acid chain; its full sequence is C-C chemokine receptor type 5 (352 aa).

Residues 1–30 (MDYQVSSPTYDIDYYTSEPCQKINVKQIAA) lie on the Extracellular side of the membrane. At Y3 the chain carries Sulfotyrosine. O-linked (GalNAc...) serine glycans are attached at residues S6 and S7. Sulfotyrosine occurs at positions 10, 14, and 15. 2 disulfide bridges follow: C20–C269 and C101–C178. A helical transmembrane segment spans residues 31-58 (RLLPPLYSLVFIFGFVGNILVVLILINC). At 59 to 68 (KRLKSMTDIY) the chain is on the cytoplasmic side. The chain crosses the membrane as a helical span at residues 69–89 (LLNLAISDLLFLLTVPFWAHY). The Extracellular segment spans residues 90–102 (AAAQWDFGNTMCQ). Residues 103-124 (LLTGLYFIGFFSGIFFIILLTI) form a helical membrane-spanning segment. The Cytoplasmic portion of the chain corresponds to 125 to 141 (DRYLAIVHAVFALKART). Residues 142–166 (VTFGVVTSVITWVVAVFASLPGIIF) traverse the membrane as a helical segment. The Extracellular segment spans residues 167–198 (TRSQREGLHYTCSSHFPYSQYQFWKNFQTLKM). The chain crosses the membrane as a helical span at residues 199-218 (VILGLVLPLLVMVICYSGIL). The Cytoplasmic segment spans residues 219–235 (KTLLRCRNEKKRHRAVR). A helical membrane pass occupies residues 236 to 260 (LIFTIMIVYFLFWAPYNIVLLLNTF). Residues 261–277 (QEFFGLNNCSSSNRLDQ) lie on the Extracellular side of the membrane. The chain crosses the membrane as a helical span at residues 278–301 (AMQVTETLGMTHCCINPIIYAFVG). At 302 to 352 (EKFRNYLLVFFQKHIAKRFCKCCSIFQQEAPERASSVYTRSTAEQEISVGL) the chain is on the cytoplasmic side. 3 S-palmitoyl cysteine lipidation sites follow: C321, C323, and C324. Residues S336, S337, S342, and S349 each carry the phosphoserine; by BARK1 modification.

This sequence belongs to the G-protein coupled receptor 1 family. In terms of assembly, interacts with PRAF2. Efficient ligand binding to CCL3/MIP-1alpha and CCL4/MIP-1beta requires sulfation, O-glycosylation and sialic acid modifications. Glycosylation on Ser-6 is required for efficient binding of CCL4. Interacts with GRK2. Interacts with ARRB1 and ARRB2. Interacts with CNIH4. Interacts with S100A4; this interaction stimulates T-lymphocyte chemotaxis. In terms of processing, sulfated on at least 2 of the N-terminal tyrosines. Sulfation is required for efficient binding of the chemokines, CCL3 and CCL4. Palmitoylation in the C-terminal is important for cell surface expression. Post-translationally, phosphorylation on serine residues in the C-terminal is stimulated by binding CC chemokines especially by APO-RANTES. In terms of processing, O-glycosylated, but not N-glycosylated. Ser-6 appears to be the major site even if Ser-7 may be also O-glycosylated. Also sialylated glycans present which contribute to chemokine binding. Thr-16 and Ser-17 may also be glycosylated and, if so, with small moieties such as a T-antigen.

It localises to the cell membrane. Its function is as follows. Receptor for a number of inflammatory CC-chemokines including CCL3/MIP-1-alpha, CCL4/MIP-1-beta and RANTES and subsequently transduces a signal by increasing the intracellular calcium ion level. May play a role in the control of granulocytic lineage proliferation or differentiation. Participates in T-lymphocyte migration to the infection site by acting as a chemotactic receptor. The polypeptide is C-C chemokine receptor type 5 (CCR5) (Macaca arctoides (Stump-tailed macaque)).